Reading from the N-terminus, the 671-residue chain is tRNA 5-methylaminomethyl-2-thiouridine biosynthesis bifunctional protein MnmC (671 aa).

A tRNA (mnm(5)s(2)U34)-methyltransferase region spans residues 1 to 245 (MVNVMNTLSF…KREMLWGEKP (245 aa)). The tract at residues 272-671 (VGGGVASLFV…RKLLKGSKVE (400 aa)) is FAD-dependent cmnm(5)s(2)U34 oxidoreductase.

It in the N-terminal section; belongs to the methyltransferase superfamily. tRNA (mnm(5)s(2)U34)-methyltransferase family. In the C-terminal section; belongs to the DAO family. FAD serves as cofactor.

The protein localises to the cytoplasm. The catalysed reaction is 5-aminomethyl-2-thiouridine(34) in tRNA + S-adenosyl-L-methionine = 5-methylaminomethyl-2-thiouridine(34) in tRNA + S-adenosyl-L-homocysteine + H(+). In terms of biological role, catalyzes the last two steps in the biosynthesis of 5-methylaminomethyl-2-thiouridine (mnm(5)s(2)U) at the wobble position (U34) in tRNA. Catalyzes the FAD-dependent demodification of cmnm(5)s(2)U34 to nm(5)s(2)U34, followed by the transfer of a methyl group from S-adenosyl-L-methionine to nm(5)s(2)U34, to form mnm(5)s(2)U34. This is tRNA 5-methylaminomethyl-2-thiouridine biosynthesis bifunctional protein MnmC from Actinobacillus pleuropneumoniae serotype 3 (strain JL03).